The primary structure comprises 266 residues: tRNA dimethylallyltransferase (266 aa).

The protein belongs to the IPP transferase family. As to quaternary structure, monomer. Mg(2+) serves as cofactor.

The catalysed reaction is adenosine(37) in tRNA + dimethylallyl diphosphate = N(6)-dimethylallyladenosine(37) in tRNA + diphosphate. Catalyzes the transfer of a dimethylallyl group onto the adenine at position 37 in tRNAs that read codons beginning with uridine, leading to the formation of N6-(dimethylallyl)adenosine (i(6)A). The protein is tRNA dimethylallyltransferase (miaA) of Helicobacter acinonychis (strain Sheeba).